The following is a 1257-amino-acid chain: Elongation factor 2 (1257 aa).

One can recognise a DOD-type homing endonuclease domain in the interval 273–402; the sequence is LAGLMFGDGC…LQLLLQKFDV (130 aa). A tr-type G domain is found at 541–782; sequence VEEHHNFAAE…MVVKHLPDPV (242 aa). GTP is bound by residues 616 to 620 and 670 to 673; these read DTPGH and NKVD. His1120 carries the diphthamide modification. Over residues 1237-1250 the composition is skewed to basic and acidic residues; that stretch reads ERKGLKPEPPKPED. The disordered stretch occupies residues 1237 to 1257; sequence ERKGLKPEPPKPEDYIEDYGG.

This sequence belongs to the TRAFAC class translation factor GTPase superfamily. Classic translation factor GTPase family. EF-G/EF-2 subfamily. In terms of processing, this protein undergoes a protein self splicing that involves a post-translational excision of the intervening region (intein) followed by peptide ligation.

Its subcellular location is the cytoplasm. Catalyzes the GTP-dependent ribosomal translocation step during translation elongation. During this step, the ribosome changes from the pre-translocational (PRE) to the post-translocational (POST) state as the newly formed A-site-bound peptidyl-tRNA and P-site-bound deacylated tRNA move to the P and E sites, respectively. Catalyzes the coordinated movement of the two tRNA molecules, the mRNA and conformational changes in the ribosome. The sequence is that of Elongation factor 2 from Methanopyrus kandleri (strain AV19 / DSM 6324 / JCM 9639 / NBRC 100938).